The following is a 258-amino-acid chain: Acyl-[acyl-carrier-protein]--UDP-N-acetylglucosamine O-acyltransferase (258 aa).

This sequence belongs to the transferase hexapeptide repeat family. LpxA subfamily. As to quaternary structure, homotrimer.

It localises to the cytoplasm. The catalysed reaction is a (3R)-hydroxyacyl-[ACP] + UDP-N-acetyl-alpha-D-glucosamine = a UDP-3-O-[(3R)-3-hydroxyacyl]-N-acetyl-alpha-D-glucosamine + holo-[ACP]. Its pathway is glycolipid biosynthesis; lipid IV(A) biosynthesis; lipid IV(A) from (3R)-3-hydroxytetradecanoyl-[acyl-carrier-protein] and UDP-N-acetyl-alpha-D-glucosamine: step 1/6. Its function is as follows. Involved in the biosynthesis of lipid A, a phosphorylated glycolipid that anchors the lipopolysaccharide to the outer membrane of the cell. In Pseudomonas syringae pv. tomato (strain ATCC BAA-871 / DC3000), this protein is Acyl-[acyl-carrier-protein]--UDP-N-acetylglucosamine O-acyltransferase.